We begin with the raw amino-acid sequence, 59 residues long: Large ribosomal subunit protein uL30 (59 aa).

Belongs to the universal ribosomal protein uL30 family. In terms of assembly, part of the 50S ribosomal subunit.

The protein is Large ribosomal subunit protein uL30 of Yersinia pseudotuberculosis serotype I (strain IP32953).